We begin with the raw amino-acid sequence, 335 residues long: Beta-hexosaminidase (335 aa).

Residues D60, R68, R133, and 163 to 164 (KH) contribute to the substrate site. H176 functions as the Proton donor/acceptor in the catalytic mechanism. D247 serves as the catalytic Nucleophile.

The protein belongs to the glycosyl hydrolase 3 family. NagZ subfamily. In terms of assembly, monomer.

It is found in the cytoplasm. It carries out the reaction Hydrolysis of terminal non-reducing N-acetyl-D-hexosamine residues in N-acetyl-beta-D-hexosaminides.. It functions in the pathway cell wall biogenesis; peptidoglycan recycling. Its function is as follows. Plays a role in peptidoglycan recycling by cleaving the terminal beta-1,4-linked N-acetylglucosamine (GlcNAc) from peptide-linked peptidoglycan fragments, giving rise to free GlcNAc, anhydro-N-acetylmuramic acid and anhydro-N-acetylmuramic acid-linked peptides. The chain is Beta-hexosaminidase from Xylella fastidiosa (strain 9a5c).